Reading from the N-terminus, the 997-residue chain is NLR family CARD domain-containing protein 4 (997 aa).

Residues 1 to 88 (MDLIRKNYAE…FFYEDLIGQR (88 aa)) form the CARD domain. Positions 95–300 (EEDLENLADH…RCGALIAETS (206 aa)) are nucleotide-binding domain (NBD). In terms of domain architecture, NACHT spans 165-478 (SPCVIEGEAG…VTKGEDFLNK (314 aa)). 171-178 (GEAGKGKT) contributes to the ATP binding site. A winged-helix domain (WHD) region spans residues 358 to 465 (MNTQTTLFST…RLSQLLSSED (108 aa)). 12 LRR repeats span residues 550–570 (LFSEKCLYINSHNISSHHIEF), 629–652 (NQSIQTLEVTLRDFHQLNKKDIKY), 708–731 (MTEMKTLSILNLHSEHLQGGLLEG), 735–758 (LVGLEKLVFHNIKIDKNDAKTLAE), 760–785 (ILSLKKLKRLSISHISNIGDGMESIA), 797–820 (ELKLIDCCLSAKALRSLGQSLYSL), 821–843 (SHIEILDLSGNYLLEEGKESVEE), 851–875 (LDAIRTLMLPGGTDVKFCLEAVLPT), 884–905 (ELAFKRWNLTNDDLMTLASYIN), 908–935 (FENLSFLDLSDNCAQSAGWLSLTAILQY), 937–958 (PNLTYVNFSTEDLFTPDPDLVR), and 972–994 (TMELNNWQLDDFDLAQIKKAKNM).

The protein resides in the cytoplasm. It localises to the cytosol. Its function is as follows. Key component of inflammasomes that indirectly senses specific proteins from pathogenic bacteria and fungi and responds by assembling an inflammasome complex that promotes caspase-1 activation, cytokine production and macrophage pyroptosis. The chain is NLR family CARD domain-containing protein 4 (nlrc4) from Xenopus tropicalis (Western clawed frog).